The sequence spans 725 residues: mRNA decay activator protein ZFP36L3 (725 aa).

Residues 1 to 25 are compositionally biased toward low complexity; sequence MANNNLNRPLNTNVADSSNSSSTPG. The disordered stretch occupies residues 1 to 119; that stretch reads MANNNLNRPL…KVSGSSSLAT (119 aa). 2 stretches are compositionally biased toward polar residues: residues 42-72 and 100-119; these read APSS…QSGA and HSLQ…SLAT. C3H1-type zinc fingers lie at residues 122 to 150 and 160 to 188; these read RYKT…HGYR and KYKT…HNQP. Residues 193–711 form a necessary for cytoplasmic localization region; sequence VLSESTLEEP…ESEFDNTNSS (519 aa). Residues 276-310 are disordered; it reads STTAHDADKDPDKDADKDPSNNSANDALAFPQEPG. The segment covering 280–294 has biased composition (basic and acidic residues); it reads HDADKDPDKDADKDP. Helical transmembrane passes span 380–400, 420–440, 441–461, and 468–488; these read LAPA…AMAL, AALA…GAAM, APGA…MATG, and AAMA…GAAV. The disordered stretch occupies residues 686 to 709; that stretch reads DEDDFLRRSSSSSSLNESEFDNTN. The segment covering 693–702 has biased composition (low complexity); the sequence is RSSSSSSLNE.

As to expression, expressed in placenta and extraembryonic tissues (at protein level). Not detected in embryos and fetus.

It localises to the cytoplasm. It is found in the membrane. Functionally, placenta-specific zinc-finger RNA-binding protein that destabilizes cytoplasmic AU-rich element (ARE)-containing mRNA transcripts by promoting their poly(A) tail removal or deadenylation, and hence provide a mechanism for attenuating protein synthesis. Binds to the 3'-UTR ARE of placental target mRNAs, such as TNF, HBEGF and LIPG. Involved in placental expression of many genes important for normal placental physiology. The chain is mRNA decay activator protein ZFP36L3 from Mus musculus (Mouse).